The primary structure comprises 1854 residues: Dystrophin, isoform D (1854 aa).

Disordered stretches follow at residues methionine 1 to alanine 65, glycine 84 to proline 161, glutamine 240 to alanine 352, leucine 516 to serine 548, threonine 595 to serine 650, valine 716 to alanine 740, leucine 783 to proline 830, and valine 1012 to arginine 1036. Low complexity-rich tracts occupy residues glutamine 11–glutamine 37 and glycine 84–serine 96. Residues glycine 143–asparagine 157 are compositionally biased toward polar residues. Residues glutamine 276–glutamine 296 show a composition bias toward low complexity. Polar residues-rich tracts occupy residues threonine 331–aspartate 345 and proline 518–alanine 536. Over residues threonine 595–alanine 606 the composition is skewed to gly residues. Positions valine 716–valine 727 are enriched in polar residues. 2 stretches are compositionally biased toward low complexity: residues threonine 728 to alanine 740 and leucine 783 to glutamine 814. Over residues asparagine 815–proline 830 the composition is skewed to polar residues. Spectrin repeat units follow at residues glutamate 936 to glutamate 1069 and threonine 1072 to glutamine 1176. The segment at alanine 1179–lysine 1209 is disordered. The WW domain occupies glutamine 1206–methionine 1239. A ZZ-type zinc finger spans residues lysine 1464–threonine 1520. Cysteine 1469, cysteine 1472, cysteine 1484, cysteine 1487, cysteine 1493, cysteine 1496, histidine 1506, and histidine 1510 together coordinate Zn(2+). Serine 1564 carries the post-translational modification Phosphoserine. Disordered stretches follow at residues glutamate 1673 to glycine 1701 and aspartate 1744 to lysine 1854. Polar residues-rich tracts occupy residues asparagine 1682 to leucine 1694 and alanine 1765 to glycine 1796. Acidic residues predominate over residues glutamine 1815 to aspartate 1826. A compositionally biased stretch (low complexity) spans serine 1827–threonine 1845.

Component of the dystrophin associated protein complex (DAPC). Interacts with Dg, via the Dg WW domain binding sites. During embryogenesis and in third instar larvae, expression is seen in pericardial cells of the dorsal vessel and in the ventral nerve cord. Expression is absent from both the embryonic and larval musculature.

The protein localises to the cell membrane. It localises to the sarcolemma. Its subcellular location is the cytoplasm. The protein resides in the cytoskeleton. Required for the maintenance of appropriate synaptic retrograde communication and the stabilization of muscle cell architecture or physiology. May play a role in anchoring the cytoskeleton to the plasma membrane. This chain is Dystrophin, isoform D (Dys), found in Drosophila melanogaster (Fruit fly).